We begin with the raw amino-acid sequence, 368 residues long: Cytochrome b (368 aa).

4 helical membrane passes run 33-53 (FGSL…FLAM), 77-99 (WLIR…THTG), 112-132 (TWMV…LGYV), and 178-198 (FYAL…MHII). Heme b is bound by residues histidine 83 and histidine 97. Residues histidine 182 and histidine 196 each contribute to the heme b site. Residue histidine 201 participates in a ubiquinone binding. The next 4 helical transmembrane spans lie at 224-244 (FSAK…SVVL), 288-308 (LGGV…PMMN), 323-343 (IAFW…SKPV), and 345-365 (SPFE…YMIM).

It belongs to the cytochrome b family. In terms of assembly, the main subunits of complex b-c1 are: cytochrome b, cytochrome c1 and the Rieske protein. The cofactor is heme b.

The protein localises to the mitochondrion inner membrane. Functionally, component of the ubiquinol-cytochrome c reductase complex (complex III or cytochrome b-c1 complex) that is part of the mitochondrial respiratory chain. The b-c1 complex mediates electron transfer from ubiquinol to cytochrome c. Contributes to the generation of a proton gradient across the mitochondrial membrane that is then used for ATP synthesis. This is Cytochrome b (mt:Cyt-b) from Bugula neritina (Brown bryozoan).